Consider the following 454-residue polypeptide: Ribosomal protein uS12 methylthiotransferase RimO (454 aa).

Residues 19 to 129 (AKVGFVSLGC…VLAQVHEHVA (111 aa)) form the MTTase N-terminal domain. The [4Fe-4S] cluster site is built by C28, C64, C93, C161, C165, and C168. The region spanning 147–384 (LTPKHYAYLK…MAVQAKISSD (238 aa)) is the Radical SAM core domain. Residues 387–453 (QVRIGQEYLI…EHDVWGVRVE (67 aa)) form the TRAM domain.

Belongs to the methylthiotransferase family. RimO subfamily. Requires [4Fe-4S] cluster as cofactor.

It is found in the cytoplasm. The catalysed reaction is L-aspartate(89)-[ribosomal protein uS12]-hydrogen + (sulfur carrier)-SH + AH2 + 2 S-adenosyl-L-methionine = 3-methylsulfanyl-L-aspartate(89)-[ribosomal protein uS12]-hydrogen + (sulfur carrier)-H + 5'-deoxyadenosine + L-methionine + A + S-adenosyl-L-homocysteine + 2 H(+). Functionally, catalyzes the methylthiolation of an aspartic acid residue of ribosomal protein uS12. The polypeptide is Ribosomal protein uS12 methylthiotransferase RimO (Colwellia psychrerythraea (strain 34H / ATCC BAA-681) (Vibrio psychroerythus)).